Here is a 786-residue protein sequence, read N- to C-terminus: Endonuclease MutS2 (786 aa).

An ATP-binding site is contributed by 335–342; it reads GPNTGGKT. The Smr domain occupies 711 to 786; the sequence is LDLRGERFEN…GLGVTVVELK (76 aa).

It belongs to the DNA mismatch repair MutS family. MutS2 subfamily. Homodimer. Binds to stalled ribosomes, contacting rRNA.

In terms of biological role, endonuclease that is involved in the suppression of homologous recombination and thus may have a key role in the control of bacterial genetic diversity. Its function is as follows. Acts as a ribosome collision sensor, splitting the ribosome into its 2 subunits. Detects stalled/collided 70S ribosomes which it binds and splits by an ATP-hydrolysis driven conformational change. Acts upstream of the ribosome quality control system (RQC), a ribosome-associated complex that mediates the extraction of incompletely synthesized nascent chains from stalled ribosomes and their subsequent degradation. Probably generates substrates for RQC. In Bacillus anthracis (strain A0248), this protein is Endonuclease MutS2.